The primary structure comprises 102 residues: NADH-quinone oxidoreductase subunit K (102 aa).

A run of 3 helical transmembrane segments spans residues 5–25 (LAHY…GIFL), 31–51 (IILL…FVAF), and 62–82 (VFVF…LAIL).

Belongs to the complex I subunit 4L family. NDH-1 is composed of 14 different subunits. Subunits NuoA, H, J, K, L, M, N constitute the membrane sector of the complex.

The protein resides in the cell inner membrane. It catalyses the reaction a quinone + NADH + 5 H(+)(in) = a quinol + NAD(+) + 4 H(+)(out). Its function is as follows. NDH-1 shuttles electrons from NADH, via FMN and iron-sulfur (Fe-S) centers, to quinones in the respiratory chain. The immediate electron acceptor for the enzyme in this species is believed to be ubiquinone. Couples the redox reaction to proton translocation (for every two electrons transferred, four hydrogen ions are translocated across the cytoplasmic membrane), and thus conserves the redox energy in a proton gradient. This Bordetella avium (strain 197N) protein is NADH-quinone oxidoreductase subunit K.